Reading from the N-terminus, the 727-residue chain is MDDDDELLLNFAAPDTSSVAASKNQNVKVSGGRWKDRRKLQLALQGRTKKRQPETGVNLIPVDESKRKRDSEDKVQLDSNKRSKFTESKGENGGKGDSYVSSLFTNNQPTSHLAPTSTTKELTYLPSNAPMKDATNFSGLGLNEKLSIHLTDHLRFMHPTKIQQLVIPSLISTENDLFVKAQTGSGKTLAFVLPIFHKLMRENKFKINRESGLFAIILTPTRELATQIYGVLETLTRCHHWIVPGIVIGGEKKKSEKARLRKGCNILVATPGRLADHLENTKTLDISQLRWLVLDEGDKLMELGFEDTIAQITAKIDSNSKIADTAEKWQGLPSRRINMLCSATLHSNVKKLGSIVLKDPEMISVETASVAGTVSFDETIATTTSTAPDQLIQNVVVVPPKLRLVTLDALLLKISKHSAERTIVFFSCSDSVDFHFDVFTRDGKKFKKVTDEETGEVKTVLVSPEDDENDGLLTAPQLSDNTIIYKLHGSLSQQTRASTLQSFVKDNNSYNKILFCTDVASRGLDLPNVANVIEYDPPFTIDDHLHRIGRSARLGNEGNATLFLLPGIEEGYVDGKLRVAHPREGNLRVKNYEKILQEGFAQGNIKSKDNKLGKWDIHATTWHLDVERWLLEDQASHDEAVRAFTSHIRAYATHLSSEREFFNVKLLHLGHLAKSFGLRETPKKLGKSVGNNSNYSESKKGKKEDPRKKMLRMAKMAVKSASSEFNY.

The interval 14–119 (PDTSSVAASK…TSHLAPTSTT (106 aa)) is disordered. Positions 15–28 (DTSSVAASKNQNVK) are enriched in polar residues. Basic and acidic residues predominate over residues 63-94 (DESKRKRDSEDKVQLDSNKRSKFTESKGENGG). Over residues 99 to 119 (YVSSLFTNNQPTSHLAPTSTT) the composition is skewed to polar residues. The Q motif signature appears at 135-164 (TNFSGLGLNEKLSIHLTDHLRFMHPTKIQQ). Residues 168–363 (PSLISTENDL…SIVLKDPEMI (196 aa)) form the Helicase ATP-binding domain. 181 to 188 (AQTGSGKT) contributes to the ATP binding site. Positions 295 to 298 (DEGD) match the DEAD box motif. In terms of domain architecture, Helicase C-terminal spans 406–613 (TLDALLLKIS…NIKSKDNKLG (208 aa)). Residues 683–727 (KKLGKSVGNNSNYSESKKGKKEDPRKKMLRMAKMAVKSASSEFNY) are disordered. Positions 697-708 (ESKKGKKEDPRK) are enriched in basic and acidic residues.

Belongs to the DEAD box helicase family. DDX31/DBP7 subfamily.

The protein resides in the nucleus. The protein localises to the nucleolus. The catalysed reaction is ATP + H2O = ADP + phosphate + H(+). Functionally, ATP-binding RNA helicase involved in the biogenesis of 60S ribosomal subunits and is required for the normal formation of 25S and 5.8S rRNAs. In Candida albicans (strain SC5314 / ATCC MYA-2876) (Yeast), this protein is ATP-dependent RNA helicase DBP7 (DBP7).